The sequence spans 511 residues: ATP synthase subunit alpha (511 aa).

Residue Gly-169 to Thr-176 coordinates ATP.

It belongs to the ATPase alpha/beta chains family. In terms of assembly, F-type ATPases have 2 components, CF(1) - the catalytic core - and CF(0) - the membrane proton channel. CF(1) has five subunits: alpha(3), beta(3), gamma(1), delta(1), epsilon(1). CF(0) has three main subunits: a(1), b(2) and c(9-12). The alpha and beta chains form an alternating ring which encloses part of the gamma chain. CF(1) is attached to CF(0) by a central stalk formed by the gamma and epsilon chains, while a peripheral stalk is formed by the delta and b chains.

Its subcellular location is the cell inner membrane. The catalysed reaction is ATP + H2O + 4 H(+)(in) = ADP + phosphate + 5 H(+)(out). Its function is as follows. Produces ATP from ADP in the presence of a proton gradient across the membrane. The alpha chain is a regulatory subunit. This Janthinobacterium sp. (strain Marseille) (Minibacterium massiliensis) protein is ATP synthase subunit alpha.